Here is a 324-residue protein sequence, read N- to C-terminus: Arginase (324 aa).

Residues His115, Asp142, His144, and Asp146 each coordinate Mn(2+). Substrate-binding positions include 144–148 (HTDLH), 155–157 (SGN), and Asp196. The Mn(2+) site is built by Asp244 and Asp246. Residues Thr258 and Glu289 each coordinate substrate.

The protein belongs to the arginase family. Homohexamer. It depends on Mn(2+) as a cofactor.

The enzyme catalyses L-arginine + H2O = urea + L-ornithine. It participates in nitrogen metabolism; urea cycle; L-ornithine and urea from L-arginine: step 1/1. The chain is Arginase (arcA) from Agrobacterium fabrum (strain C58 / ATCC 33970) (Agrobacterium tumefaciens (strain C58)).